We begin with the raw amino-acid sequence, 448 residues long: Chaperone SurA (448 aa).

The N-terminal stretch at 1 to 27 (MKKTLRFAAVASGLVASLITVAPSASA) is a signal peptide. 2 consecutive PpiC domains span residues 185–288 (QQDL…RLVE) and 301–399 (IVQT…QVLG).

The protein resides in the periplasm. The catalysed reaction is [protein]-peptidylproline (omega=180) = [protein]-peptidylproline (omega=0). Chaperone involved in the correct folding and assembly of outer membrane proteins. Recognizes specific patterns of aromatic residues and the orientation of their side chains, which are found more frequently in integral outer membrane proteins. May act in both early periplasmic and late outer membrane-associated steps of protein maturation. This Burkholderia mallei (strain ATCC 23344) protein is Chaperone SurA.